A 472-amino-acid polypeptide reads, in one-letter code: Carboxypeptidase Q (472 aa).

A signal peptide spans 1–20 (MKFLIFAFFGGVHLLSLCSG). A propeptide spanning residues 21–44 (KAICKNGISKRTFEEIKEEIASCG) is cleaved from the precursor. N-linked (GlcNAc...) asparagine glycans are attached at residues Asn-61 and Asn-179. Positions 290 and 302 each coordinate Zn(2+). Glu-336 acts as the Nucleophile in catalysis. Glu-337 is a binding site for Zn(2+). Residues Asn-353 and Asn-356 are each glycosylated (N-linked (GlcNAc...) asparagine). Asp-364 contributes to the Zn(2+) binding site. Asn-396 carries an N-linked (GlcNAc...) asparagine glycan. Residue His-434 coordinates Zn(2+).

Belongs to the peptidase M28 family. In terms of assembly, homodimer. The monomeric form is inactive while the homodimer is active. Post-translationally, N-glycosylated. The secreted form is modified by hybrid or complex type oligosaccharide chains. In terms of tissue distribution, mainly detected in blood plasma. Abundant in placenta and kidney. Present at low level in muscles, liver and skin fibroblasts. Not detected in brain or white blood cells (at protein level).

It localises to the endoplasmic reticulum. The protein localises to the golgi apparatus. Its subcellular location is the lysosome. It is found in the secreted. Functionally, carboxypeptidase that may play an important role in the hydrolysis of circulating peptides. Catalyzes the hydrolysis of dipeptides with unsubstituted terminals into amino acids. May play a role in the liberation of thyroxine hormone from its thyroglobulin (Tg) precursor. The sequence is that of Carboxypeptidase Q (CPQ) from Homo sapiens (Human).